The sequence spans 303 residues: tRNA pseudouridine synthase A (303 aa).

Asp59 functions as the Nucleophile in the catalytic mechanism. A substrate-binding site is contributed by Tyr128.

The protein belongs to the tRNA pseudouridine synthase TruA family. Homodimer.

It catalyses the reaction uridine(38/39/40) in tRNA = pseudouridine(38/39/40) in tRNA. Formation of pseudouridine at positions 38, 39 and 40 in the anticodon stem and loop of transfer RNAs. The protein is tRNA pseudouridine synthase A of Bifidobacterium longum (strain DJO10A).